The chain runs to 348 residues: Gamma-glutamyl hydrolase 1 (348 aa).

The signal sequence occupies residues 1 to 23 (MIDNNCLYKEELNRNSYSGLAKE). The Gamma-glutamyl hydrolase domain maps to 46-342 (SPDPNLNYRP…RGYDEVYIFT (297 aa)). The active-site Nucleophile is the cysteine 156. Residue histidine 269 is part of the active site.

The protein belongs to the peptidase C26 family. Highly expressed in roots and at lower levels in leaves, stems and siliques.

It is found in the vacuole. Its subcellular location is the secreted. It localises to the extracellular space. The protein localises to the cell wall. The catalysed reaction is (6S)-5,6,7,8-tetrahydrofolyl-(gamma-L-Glu)(n) + (n-1) H2O = (6S)-5,6,7,8-tetrahydrofolate + (n-1) L-glutamate. Cleaves the polyglutamate sidechains of folate polyglutamates in the vacuole. Is important for polyglutamyl tail length determination before vacuolar exit. Plays a role in folate stability and intracellular folate content. This chain is Gamma-glutamyl hydrolase 1 (GGH1), found in Arabidopsis thaliana (Mouse-ear cress).